The following is a 408-amino-acid chain: Na(+)-translocating NADH-quinone reductase subunit F (408 aa).

The chain crosses the membrane as a helical span at residues 6–26 (IILGVVMFTAIVLALVAIILA). Residues 35–127 (GDVTIRINGE…DMDVEVPEEV (93 aa)) enclose the 2Fe-2S ferredoxin-type domain. [2Fe-2S] cluster contacts are provided by cysteine 70, cysteine 76, cysteine 79, and cysteine 111. The region spanning 130–270 (VKAWECTVES…YGPFGEFFAK (141 aa)) is the FAD-binding FR-type domain.

The protein belongs to the NqrF family. In terms of assembly, composed of six subunits; NqrA, NqrB, NqrC, NqrD, NqrE and NqrF. It depends on [2Fe-2S] cluster as a cofactor. FAD is required as a cofactor.

Its subcellular location is the cell inner membrane. It carries out the reaction a ubiquinone + n Na(+)(in) + NADH + H(+) = a ubiquinol + n Na(+)(out) + NAD(+). Functionally, NQR complex catalyzes the reduction of ubiquinone-1 to ubiquinol by two successive reactions, coupled with the transport of Na(+) ions from the cytoplasm to the periplasm. The first step is catalyzed by NqrF, which accepts electrons from NADH and reduces ubiquinone-1 to ubisemiquinone by a one-electron transfer pathway. In Marinomonas sp. (strain MWYL1), this protein is Na(+)-translocating NADH-quinone reductase subunit F.